The primary structure comprises 67 residues: Neurotoxin Os3 (67 aa).

Residues 3 to 67 (RDGYIAQPHN…GVIVDGEKCH (65 aa)) form the LCN-type CS-alpha/beta domain. Intrachain disulfides connect C13–C66, C17–C39, C24–C48, and C28–C50.

This sequence belongs to the long (4 C-C) scorpion toxin superfamily. Sodium channel inhibitor family. Alpha subfamily. In terms of tissue distribution, expressed by the venom gland.

Its subcellular location is the secreted. In terms of biological role, binds to sodium channels (Nav) and inhibits the inactivation of the activated channels, thereby blocking neuronal transmission. This chain is Neurotoxin Os3, found in Orthochirus scrobiculosus (Central Asian scorpion).